Reading from the N-terminus, the 130-residue chain is Histone H2A.1 (130 aa).

The interval 1-21 (MSGGKGKVGSSEKASTSRSAK) is disordered. S2 carries the N-acetylserine modification. An N6-acetyllysine mark is found at K5 and K7. An N5-methylglutamine modification is found at Q105. S127 is subject to Phosphoserine. A [ST]-Q motif motif is present at residues 127-128 (SQ).

Belongs to the histone H2A family. The nucleosome is a histone octamer containing two molecules each of H2A, H2B, H3 and H4 assembled in one H3-H4 heterotetramer and two H2A-H2B heterodimers. The octamer wraps approximately 147 bp of DNA. Phosphorylated to form H2AS128ph (gamma-H2A) in response to DNA double-strand breaks (DSBs) generated by exogenous genotoxic agents and by stalled replication forks. Phosphorylation is dependent on the DNA damage checkpoint kinases MEC1/ATR and TEL1/ATM, spreads on either side of a detected DSB site and may mark the surrounding chromatin for recruitment of proteins required for DNA damage signaling and repair. Gamma-H2A is removed from the DNA prior to the strand invasion-primer extension step of the repair process and subsequently dephosphorylated. Dephosphorylation is necessary for efficient recovery from the DNA damage checkpoint. Post-translationally, acetylated by ESA1 to form H2AK4ac and H2AK7ac.

The protein localises to the nucleus. Its subcellular location is the chromosome. In terms of biological role, core component of nucleosome which plays a central role in DNA double strand break (DSB) repair. Nucleosomes wrap and compact DNA into chromatin, limiting DNA accessibility to the cellular machineries which require DNA as a template. Histones thereby play a central role in transcription regulation, DNA repair, DNA replication and chromosomal stability. DNA accessibility is regulated via a complex set of post-translational modifications of histones, also called histone code, and nucleosome remodeling. This chain is Histone H2A.1 (HTA1), found in Meyerozyma guilliermondii (strain ATCC 6260 / CBS 566 / DSM 6381 / JCM 1539 / NBRC 10279 / NRRL Y-324) (Yeast).